The primary structure comprises 312 residues: Glycine--tRNA ligase alpha subunit (312 aa).

This sequence belongs to the class-II aminoacyl-tRNA synthetase family. As to quaternary structure, tetramer of two alpha and two beta subunits.

It is found in the cytoplasm. The catalysed reaction is tRNA(Gly) + glycine + ATP = glycyl-tRNA(Gly) + AMP + diphosphate. The sequence is that of Glycine--tRNA ligase alpha subunit from Nostoc punctiforme (strain ATCC 29133 / PCC 73102).